Here is a 122-residue protein sequence, read N- to C-terminus: uncharacterized protein (122 aa).

Transmembrane regions (helical) follow at residues 34-54 and 91-111; these read IIFL…GVLV and FVLA…FVSF.

It is found in the cell membrane. This is an uncharacterized protein from Mycoplasma pneumoniae (strain ATCC 29342 / M129 / Subtype 1) (Mycoplasmoides pneumoniae).